The following is a 519-amino-acid chain: Cytochrome P450 52A13 (519 aa).

Residue cysteine 466 participates in heme binding.

This sequence belongs to the cytochrome P450 family. The cofactor is heme.

The protein localises to the membrane. Functionally, together with an NADPH cytochrome P450 the enzyme system catalyzes the terminal hydroxylation as the first step in the assimilation of alkanes and fatty acids. The polypeptide is Cytochrome P450 52A13 (CYP52A13) (Debaryomyces hansenii (Yeast)).